Reading from the N-terminus, the 189-residue chain is Ion-translocating oxidoreductase complex subunit B (189 aa).

Residues 1 to 26 (MSGIFIAIILLTILALLFGILLGFAA) are hydrophobic. Residues 32–90 (EGDPLVDQLEALLPQTQCGQCGYPGCRPYAEAIANGEKINLCPPGGSATMEKLAEMAGV) enclose the 4Fe-4S domain. Residues cysteine 49, cysteine 52, cysteine 57, cysteine 73, cysteine 114, cysteine 117, cysteine 120, cysteine 124, cysteine 144, cysteine 147, cysteine 150, and cysteine 154 each coordinate [4Fe-4S] cluster. 4Fe-4S ferredoxin-type domains follow at residues 105–134 (KVAY…GSGK) and 135–164 (LMHT…MLPV).

The protein belongs to the 4Fe4S bacterial-type ferredoxin family. RnfB subfamily. As to quaternary structure, the complex is composed of six subunits: RnfA, RnfB, RnfC, RnfD, RnfE and RnfG. The cofactor is [4Fe-4S] cluster.

The protein resides in the cell inner membrane. In terms of biological role, part of a membrane-bound complex that couples electron transfer with translocation of ions across the membrane. In Shewanella sediminis (strain HAW-EB3), this protein is Ion-translocating oxidoreductase complex subunit B.